The primary structure comprises 154 residues: MHKKSSTLIRKREISDVTKESKVVLKSDQQWREQLSEQEYHVCREQGTEPPFSGKLLHNKDSGEYACTCCYAPLFSSVNKYDSGCGWPSFDAPINETAVLYLDDFSHGMKRVEIRCARCDSHLGHVFPDGPKTTGERFCVNSVSLIFNKIETNE.

The MsrB domain maps to 28-150 (DQQWREQLSE…NSVSLIFNKI (123 aa)). Positions 67, 70, 116, and 119 each coordinate Zn(2+). The active-site Nucleophile is the Cys139.

Belongs to the MsrB Met sulfoxide reductase family. It depends on Zn(2+) as a cofactor.

It catalyses the reaction L-methionyl-[protein] + [thioredoxin]-disulfide + H2O = L-methionyl-(R)-S-oxide-[protein] + [thioredoxin]-dithiol. The protein is Peptide methionine sulfoxide reductase MsrB of Vibrio vulnificus (strain YJ016).